The following is a 514-amino-acid chain: Probable drug/proton antiporter YHK8 (514 aa).

Residues 1-74 are Cytoplasmic-facing; the sequence is MVAEFQIASA…RHMSTARRYY (74 aa). A helical transmembrane segment spans residues 75–95; that stretch reads ISSLITFTSMVITMISSSWTL. Topologically, residues 96–111 are extracellular; sequence PSTHIIEHFHISHEVS. The helical transmembrane segment at 112-132 threads the bilayer; sequence TLGITLYVFGLGIGPLFLSPL. Topologically, residues 133 to 141 are cytoplasmic; that stretch reads SELYGRRIT. The helical transmembrane segment at 142–162 threads the bilayer; that stretch reads FLYALTLSIIWQCLTIWSKTI. Residues 163–170 are Extracellular-facing; sequence TGVMFGRF. Residues 171-191 form a helical membrane-spanning segment; that stretch reads LSGFFGSAFLSVAGGAIADIF. Residues 192–200 are Cytoplasmic-facing; the sequence is DKDQIGIPM. The helical transmembrane segment at 201–221 threads the bilayer; it reads AIYTTSAFLGPSLGPIIGGAL. The Extracellular portion of the chain corresponds to 222 to 227; the sequence is YHQSYK. Residues 228-248 traverse the membrane as a helical segment; the sequence is WTFITLLITSGCCLVMIIFTI. Residues 249-307 are Cytoplasmic-facing; that stretch reads PETYKPMLLIRKAKRLRKEKNDQRYYAVLEVTREQTSLLSAIFLSTKRPFGLLLRDRMM. The helical transmembrane segment at 308 to 328 threads the bilayer; that stretch reads GVLCFYTGLELAIIYLYFVAF. The Extracellular segment spans residues 329-342; it reads PYVFKKLYNFGPME. A helical transmembrane segment spans residues 343–363; sequence IACSYIGIMVGMILSAPTCLL. Residues 364–386 are Cytoplasmic-facing; that stretch reads FQKTFEWRVKRNNGVKTPEMRFE. A helical transmembrane segment spans residues 387–407; sequence PLFYGAFLTPVGLFIFAFTCY. Residues 408 to 412 are Extracellular-facing; that stretch reads KHVHW. The chain crosses the membrane as a helical span at residues 413–433; sequence IAPIIGSAIFGSGVYFVFTGV. At 434–447 the chain is on the cytoplasmic side; sequence FAYTVDAYRRYAAS. A helical transmembrane segment spans residues 448–468; the sequence is GMACNTFVRCIMAGVFPLFGL. Residues 469 to 477 are Extracellular-facing; sequence QMYKSMGVN. A helical membrane pass occupies residues 478–498; sequence WAGFLLAMVTVAMIPVPFLFT. Over 499 to 514 the chain is Cytoplasmic; it reads KYGARLRAKSPYAWDD.

This sequence belongs to the major facilitator superfamily. CAR1 family.

Its subcellular location is the membrane. Probable drug/proton antiporter. The protein is Probable drug/proton antiporter YHK8 (YHK8) of Saccharomyces cerevisiae (strain ATCC 204508 / S288c) (Baker's yeast).